Consider the following 506-residue polypeptide: Probable Xaa-Pro aminopeptidase BDCG_04966 (506 aa).

Residues Asp-285, Asp-296, Glu-433, and Glu-471 each coordinate Mn(2+).

It belongs to the peptidase M24B family. Mn(2+) serves as cofactor.

It catalyses the reaction Release of any N-terminal amino acid, including proline, that is linked to proline, even from a dipeptide or tripeptide.. Catalyzes the removal of a penultimate prolyl residue from the N-termini of peptides. In Ajellomyces dermatitidis (strain ER-3 / ATCC MYA-2586) (Blastomyces dermatitidis), this protein is Probable Xaa-Pro aminopeptidase BDCG_04966.